We begin with the raw amino-acid sequence, 1434 residues long: Pleiotropic drug resistance protein 1 (1434 aa).

Residues 1–22 (MEPANLSNLRGSSLRGSTRGSL) are disordered. Residues 161-434 (LNSLHILSSR…FESMGFKCPQ (274 aa)) form the ABC transporter 1 domain. ATP is bound at residue 194 to 201 (GPPSSGKT). In terms of domain architecture, ABC transmembrane type-2 1 spans 512-725 (ELLKVCTERE…SVNSILVNEF (214 aa)). The next 7 membrane-spanning stretches (helical) occupy residues 530 to 550 (FVYM…MTLF), 563 to 583 (GGIY…NGMS), 618 to 638 (IPVT…VIGF), 649 to 669 (FLLL…IGAV), 675 to 695 (VAST…GFVL), 702 to 722 (SWWI…SILV), and 760 to 780 (IGVG…SLAL). The tract at residues 793 to 824 (LPEDGENAENGEVSSQITSTDGGDSISESQNN) is disordered. A compositionally biased stretch (polar residues) spans 804 to 824 (EVSSQITSTDGGDSISESQNN). The region spanning 837–1089 (ITFDDVVYSV…HLIKYFESNP (253 aa)) is the ABC transporter 2 domain. 882–889 (GVSGAGKT) contributes to the ATP binding site. The region spanning 1162–1376 (TQCVACLWKQ…TLYGLVASQF (215 aa)) is the ABC transmembrane type-2 2 domain. 7 consecutive transmembrane segments (helical) span residues 1181 to 1201 (YTAV…TMFW), 1221 to 1241 (YAAV…VVAI), 1269 to 1289 (IPYI…MIGF), 1296 to 1316 (FFWY…YGMM), 1326 to 1346 (VASI…GFII), 1357 to 1377 (WYYW…SQFG), and 1406 to 1426 (VVAA…AFAI).

This sequence belongs to the ABC transporter superfamily. ABCG family. PDR (TC 3.A.1.205) subfamily.

The protein localises to the membrane. May be a general defense protein. This is Pleiotropic drug resistance protein 1 (PDR1) from Nicotiana tabacum (Common tobacco).